Reading from the N-terminus, the 426-residue chain is Glutamate-1-semialdehyde 2,1-aminomutase (426 aa).

Lysine 265 is modified (N6-(pyridoxal phosphate)lysine).

It belongs to the class-III pyridoxal-phosphate-dependent aminotransferase family. HemL subfamily. In terms of assembly, homodimer. It depends on pyridoxal 5'-phosphate as a cofactor.

The protein localises to the cytoplasm. It catalyses the reaction (S)-4-amino-5-oxopentanoate = 5-aminolevulinate. Its pathway is porphyrin-containing compound metabolism; protoporphyrin-IX biosynthesis; 5-aminolevulinate from L-glutamyl-tRNA(Glu): step 2/2. In Klebsiella pneumoniae (strain 342), this protein is Glutamate-1-semialdehyde 2,1-aminomutase.